We begin with the raw amino-acid sequence, 359 residues long: Phospho-N-acetylmuramoyl-pentapeptide-transferase (359 aa).

A run of 10 helical transmembrane segments spans residues 27–47, 71–91, 93–113, 134–154, 170–190, 203–223, 234–254, 262–282, 286–306, and 336–356; these read IGAA…FIRT, VPTM…LLWA, LDNP…MIGA, LLLQ…HPGY, LGWF…NAVN, MVVS…VVLA, SGEL…FLWF, FMGD…AIII, FLLA…MLQV, and KVVV…IATL.

This sequence belongs to the glycosyltransferase 4 family. MraY subfamily. Requires Mg(2+) as cofactor.

The protein resides in the cell inner membrane. It carries out the reaction UDP-N-acetyl-alpha-D-muramoyl-L-alanyl-gamma-D-glutamyl-meso-2,6-diaminopimeloyl-D-alanyl-D-alanine + di-trans,octa-cis-undecaprenyl phosphate = di-trans,octa-cis-undecaprenyl diphospho-N-acetyl-alpha-D-muramoyl-L-alanyl-D-glutamyl-meso-2,6-diaminopimeloyl-D-alanyl-D-alanine + UMP. It participates in cell wall biogenesis; peptidoglycan biosynthesis. Functionally, catalyzes the initial step of the lipid cycle reactions in the biosynthesis of the cell wall peptidoglycan: transfers peptidoglycan precursor phospho-MurNAc-pentapeptide from UDP-MurNAc-pentapeptide onto the lipid carrier undecaprenyl phosphate, yielding undecaprenyl-pyrophosphoryl-MurNAc-pentapeptide, known as lipid I. This Desulfotalea psychrophila (strain LSv54 / DSM 12343) protein is Phospho-N-acetylmuramoyl-pentapeptide-transferase.